A 311-amino-acid polypeptide reads, in one-letter code: Pyrimidine-specific ribonucleoside hydrolase RihA (311 aa).

The active site involves His-240.

It belongs to the IUNH family. RihA subfamily.

Functionally, hydrolyzes with equal efficiency cytidine or uridine to ribose and cytosine or uracil, respectively. The chain is Pyrimidine-specific ribonucleoside hydrolase RihA from Escherichia coli O45:K1 (strain S88 / ExPEC).